Reading from the N-terminus, the 126-residue chain is Large ribosomal subunit protein uL22 (126 aa).

Belongs to the universal ribosomal protein uL22 family. As to quaternary structure, part of the 50S ribosomal subunit.

Its function is as follows. This protein binds specifically to 23S rRNA; its binding is stimulated by other ribosomal proteins, e.g. L4, L17, and L20. It is important during the early stages of 50S assembly. It makes multiple contacts with different domains of the 23S rRNA in the assembled 50S subunit and ribosome. The globular domain of the protein is located near the polypeptide exit tunnel on the outside of the subunit, while an extended beta-hairpin is found that lines the wall of the exit tunnel in the center of the 70S ribosome. In Paracoccus denitrificans (strain Pd 1222), this protein is Large ribosomal subunit protein uL22.